The following is a 160-amino-acid chain: Phosphopantetheine adenylyltransferase (160 aa).

Residue serine 10 coordinates substrate. ATP is bound by residues 10–11 (SF) and histidine 18. Substrate contacts are provided by lysine 42, threonine 74, and arginine 88. ATP-binding positions include 89-91 (GLR), glutamate 99, and 124-130 (FYYISSR).

The protein belongs to the bacterial CoaD family. As to quaternary structure, homohexamer. Mg(2+) serves as cofactor.

It localises to the cytoplasm. The catalysed reaction is (R)-4'-phosphopantetheine + ATP + H(+) = 3'-dephospho-CoA + diphosphate. It functions in the pathway cofactor biosynthesis; coenzyme A biosynthesis; CoA from (R)-pantothenate: step 4/5. In terms of biological role, reversibly transfers an adenylyl group from ATP to 4'-phosphopantetheine, yielding dephospho-CoA (dPCoA) and pyrophosphate. The sequence is that of Phosphopantetheine adenylyltransferase from Bdellovibrio bacteriovorus (strain ATCC 15356 / DSM 50701 / NCIMB 9529 / HD100).